The following is an 82-amino-acid chain: High-potential iron-sulfur protein (82 aa).

[4Fe-4S] cluster contacts are provided by C42, C45, C60, and C74.

Belongs to the high-potential iron-sulfur protein (HiPIP) family. In terms of assembly, homodimer.

It is found in the periplasm. Specific class of high-redox-potential 4Fe-4S ferredoxins. Functions in anaerobic electron transport in most purple and in some other photosynthetic bacteria and in at least one genus (Paracoccus) of halophilic, denitrifying bacteria. In Marichromatium purpuratum (Chromatium purpuratum), this protein is High-potential iron-sulfur protein (hip).